Here is an 85-residue protein sequence, read N- to C-terminus: Small ribosomal subunit protein uS17 (85 aa).

It belongs to the universal ribosomal protein uS17 family. In terms of assembly, part of the 30S ribosomal subunit.

Functionally, one of the primary rRNA binding proteins, it binds specifically to the 5'-end of 16S ribosomal RNA. This Pseudoalteromonas translucida (strain TAC 125) protein is Small ribosomal subunit protein uS17.